The chain runs to 355 residues: S-adenosylmethionine:tRNA ribosyltransferase-isomerase (355 aa).

This sequence belongs to the QueA family. Monomer.

The protein localises to the cytoplasm. The enzyme catalyses 7-aminomethyl-7-carbaguanosine(34) in tRNA + S-adenosyl-L-methionine = epoxyqueuosine(34) in tRNA + adenine + L-methionine + 2 H(+). The protein operates within tRNA modification; tRNA-queuosine biosynthesis. Functionally, transfers and isomerizes the ribose moiety from AdoMet to the 7-aminomethyl group of 7-deazaguanine (preQ1-tRNA) to give epoxyqueuosine (oQ-tRNA). This Photorhabdus laumondii subsp. laumondii (strain DSM 15139 / CIP 105565 / TT01) (Photorhabdus luminescens subsp. laumondii) protein is S-adenosylmethionine:tRNA ribosyltransferase-isomerase.